A 587-amino-acid polypeptide reads, in one-letter code: Beta-(1--&gt;2)glucan export ATP-binding/permease protein NdvA (587 aa).

The ABC transmembrane type-1 domain occupies 21–301 (VSLVVIANIV…MRQFATQIFE (281 aa)). 6 consecutive transmembrane segments (helical) span residues 23-43 (LVVIANIVLATITIAEPILFG), 57-77 (PILFMWAAFAVFNTVAFVLVS), 126-146 (LFGLWLEFMRNHLSTVIALAL), 158-178 (LSAVLIVLGIAYWLIGRVVMS), 248-268 (MASTIAMMVVLIIGTMLVQSG), and 272-292 (IGDVIAFIGFANLLIARLDLM). The 235-residue stretch at 335–569 (IEFRDVSFGF…NGRFAALLRA (235 aa)) folds into the ABC transporter domain. Residue 368 to 375 (GPTGAGKT) coordinates ATP.

Belongs to the ABC transporter superfamily. Beta-(1--&gt;2)glucan exporter (TC 3.A.1.108.1) family. As to quaternary structure, homodimer.

The protein localises to the cell inner membrane. It carries out the reaction [(1-&gt;2)-beta-D-glucosyl](n)(in) + ATP + H2O = [(1-&gt;2)-beta-D-glucosyl](n)(out) + ADP + phosphate + H(+). In terms of biological role, involved in beta-(1--&gt;2)glucan export. Transmembrane domains (TMD) form a pore in the inner membrane and the ATP-binding domain (NBD) is responsible for energy generation. This Rhizobium etli (strain ATCC 51251 / DSM 11541 / JCM 21823 / NBRC 15573 / CFN 42) protein is Beta-(1--&gt;2)glucan export ATP-binding/permease protein NdvA.